Reading from the N-terminus, the 327-residue chain is MQPLTRTICALFCLLLTLPLTFGSPFELEPRRNKLKIGTRIKQRRPTYAIAHMVLDKTGVKDAIKHGANALEIDVAAYRGGWWADHDMKAKSKGWSLESLFQVIAKENKHIAFVWLDLKTPDMCTGKKCNKKVLQPSKCKENEKCSMKSLQQLTRKYLKPAGVRVLFGFYKKHHARSAAFDYIQKSLGDGEAVCLSGEANKVMEIFKKEGSKIKPQRRVMDYGRTELPNGFGDCNEKGGKTCAELKNGAKLRQKGDLQRVFAWTSHVGEGKYVNKLLDKASVDGIIYGFAKTRYYHHKDTEKSSKDIIDRVKKSKSRYMVTGADKLW.

The first 23 residues, 1–23 (MQPLTRTICALFCLLLTLPLTFG), serve as a signal peptide directing secretion. His-52 is an active-site residue. Mg(2+) is bound by residues Glu-72, Asp-74, and Asp-117. An SMD-tail motif is present at residues 320 to 327 (VTGADKLW).

Belongs to the sphingomyelinase D/phospholipase D family. Requires Mg(2+) as cofactor.

The protein resides in the secreted. The enzyme catalyses a sphingomyelin + H2O = an N-acylsphing-4-enine 1-phosphate + choline + H(+). In terms of biological role, catalyzes the hydrolysis of sphingomyelin. Sphingomyelinases D are produced by some spider in their venoms, but also by arthropods such as ticks, or pathogenic bacteria and fungi. They might play a role in pathogenicity through different mechanisms, such as membrane destabilization and host cell penetration, but also pulmonary inflammation and cutaneous lesions. This chain is Sphingomyelinase D, found in Paracoccidioides brasiliensis (strain Pb03).